We begin with the raw amino-acid sequence, 332 residues long: L-lactate dehydrogenase A chain (332 aa).

NAD(+)-binding positions include 29–57 (GMVG…MEDK) and R99. Substrate is bound by residues R106, N138, and R169. NAD(+) is bound at residue N138. Residue H193 is the Proton acceptor of the active site. T248 is a binding site for substrate.

The protein belongs to the LDH/MDH superfamily. LDH family. In terms of assembly, homotetramer.

The protein resides in the cytoplasm. The enzyme catalyses (S)-lactate + NAD(+) = pyruvate + NADH + H(+). The protein operates within fermentation; pyruvate fermentation to lactate; (S)-lactate from pyruvate: step 1/1. In terms of biological role, interconverts simultaneously and stereospecifically pyruvate and lactate with concomitant interconversion of NADH and NAD(+). The polypeptide is L-lactate dehydrogenase A chain (ldha) (Fundulus heteroclitus (Killifish)).